The following is a 373-amino-acid chain: Chaperone protein DnaJ (373 aa).

Residues 5 to 70 form the J domain; that stretch reads DYYEVLGLQK…EKKSNYDQFG (66 aa). The CR-type zinc finger occupies 132–214; sequence GVEKEITVNR…CRGNGNVRKT (83 aa). C145, C148, C162, C165, C188, C191, C202, and C205 together coordinate Zn(2+). 4 CXXCXGXG motif repeats span residues 145 to 152, 162 to 169, 188 to 195, and 202 to 209; these read CEHCNGSG, CPTCSGTG, CDRCSGTG, and CTHCRGNG.

It belongs to the DnaJ family. In terms of assembly, homodimer. The cofactor is Zn(2+).

It localises to the cytoplasm. Its function is as follows. Participates actively in the response to hyperosmotic and heat shock by preventing the aggregation of stress-denatured proteins and by disaggregating proteins, also in an autonomous, DnaK-independent fashion. Unfolded proteins bind initially to DnaJ; upon interaction with the DnaJ-bound protein, DnaK hydrolyzes its bound ATP, resulting in the formation of a stable complex. GrpE releases ADP from DnaK; ATP binding to DnaK triggers the release of the substrate protein, thus completing the reaction cycle. Several rounds of ATP-dependent interactions between DnaJ, DnaK and GrpE are required for fully efficient folding. Also involved, together with DnaK and GrpE, in the DNA replication of plasmids through activation of initiation proteins. This Clostridium botulinum (strain Alaska E43 / Type E3) protein is Chaperone protein DnaJ.